The chain runs to 363 residues: UDP-N-acetylglucosamine--N-acetylmuramyl-(pentapeptide) pyrophosphoryl-undecaprenol N-acetylglucosamine transferase (363 aa).

Residues 10–12 (TGG), Asn-124, Ser-195, Ile-250, and Gln-295 contribute to the UDP-N-acetyl-alpha-D-glucosamine site.

It belongs to the glycosyltransferase 28 family. MurG subfamily.

Its subcellular location is the cell membrane. It catalyses the reaction Mur2Ac(oyl-L-Ala-gamma-D-Glu-L-Lys-D-Ala-D-Ala)-di-trans,octa-cis-undecaprenyl diphosphate + UDP-N-acetyl-alpha-D-glucosamine = beta-D-GlcNAc-(1-&gt;4)-Mur2Ac(oyl-L-Ala-gamma-D-Glu-L-Lys-D-Ala-D-Ala)-di-trans,octa-cis-undecaprenyl diphosphate + UDP + H(+). The protein operates within cell wall biogenesis; peptidoglycan biosynthesis. Cell wall formation. Catalyzes the transfer of a GlcNAc subunit on undecaprenyl-pyrophosphoryl-MurNAc-pentapeptide (lipid intermediate I) to form undecaprenyl-pyrophosphoryl-MurNAc-(pentapeptide)GlcNAc (lipid intermediate II). The chain is UDP-N-acetylglucosamine--N-acetylmuramyl-(pentapeptide) pyrophosphoryl-undecaprenol N-acetylglucosamine transferase from Lactiplantibacillus plantarum (strain ATCC BAA-793 / NCIMB 8826 / WCFS1) (Lactobacillus plantarum).